We begin with the raw amino-acid sequence, 157 residues long: Monooxygenase CPUR_05417 (157 aa).

The protein belongs to the avfA family.

Its pathway is secondary metabolite biosynthesis. Functionally, monooxygenase; part of the ergochrome gene cluster responsible for the typical purple-black color of the ergot sclerotia. The ergochrome gene cluster produces several ergot pigments including the yellow ergochrome secalonic acid and its derivatives, as well as the red anthraquinones endocrocin and clavorubin. The pathway begins with the synthesis of atrochrysone thioester by the polyketide synthase (PKS) CPUR_05437. The atrochrysone carboxyl ACP thioesterase CPUR_05436 then breaks the thioester bond and releases the atrochrysone carboxylic acid from CPUR_05437. The atrochrysone carboxylic acid is then converted to atrochrysone which is further transformed into emodin anthrone. The next step is performed by the anthrone oxygenase CPUR_05434 that catalyzes the oxidation of emodinanthrone to emodin. Emodin is further modified to yield monodictyphenone via several steps involving CPUR_05427, CPUR_05428, CPUR_05429 and CPUR_05430. The short chain dehydrogenase/reductase CPUR_05418 then catalyzes the C-5 ketoreduction to give the xanthone skeleton of the monomeric units. Ergochromes formation requires further dimerization steps of different xanthone units, probably catalyzed by the cytochrome P450 monooxygenase CPUR_05419. CPUR_05425, CPUR_05426 and CPUR_05431 are unique to Claviceps, thus it is likely that they are involved in further modification of xanthone units or in their dimerization. The yellow ergochromes and the red anthraquinone pigments endocrocin and clavorubin are products from the same PKS derived precursors and the latter are likely shunt products in the pathway of xanthone biosynthesis. It is proposed that atrochrysone carboxylic acid released from the PKS CPUR_05437 can also be converted to endocrocin anthrone which is further oxidized into endocrocin by CPUR_05435. Endocrocin could be then modified to clavorubin, possibly by CPUR_05423 and CPUR_05431. Clavorubin is the principal anthraquinone metabolite produced by the cluster with a much higher yield compared to endocrocin. The sequence is that of Monooxygenase CPUR_05417 from Claviceps purpurea (strain 20.1) (Ergot fungus).